The sequence spans 282 residues: Protein N-terminal and lysine N-methyltransferase efm7 (282 aa).

Residues 1–13 show a composition bias toward basic and acidic residues; the sequence is MSKPEEVVNHVPE. The disordered stretch occupies residues 1–32; that stretch reads MSKPEEVVNHVPEDEGSDIEAGGLFEDPPDFY. Residues W67, 93–95, D115, W152, and A179 each bind S-adenosyl-L-methionine; that span reads GAA.

Belongs to the class I-like SAM-binding methyltransferase superfamily. EFM7 family.

It localises to the cytoplasm. Functionally, S-adenosyl-L-methionine-dependent protein methyltransferase that trimethylates the N-terminal glycine 'Gly-2' of elongation factor 1-alpha, before also catalyzing the mono- and dimethylation of 'Lys-3'. This chain is Protein N-terminal and lysine N-methyltransferase efm7 (nnt-1), found in Neurospora crassa (strain ATCC 24698 / 74-OR23-1A / CBS 708.71 / DSM 1257 / FGSC 987).